A 908-amino-acid chain; its full sequence is Protein translocase subunit SecA (908 aa).

ATP-binding positions include Gln87, 105–109 (GEGKT), and Asp511. Basic and acidic residues predominate over residues 559–570 (ERHESRRIDNQL). Disordered regions lie at residues 559–582 (ERHE…DPGS) and 841–908 (RRRR…GRLE). The span at 847-856 (LAQQMQRAQA) shows a compositional bias: low complexity. Residues 862–873 (TEEDSDAEEQAE) are compositionally biased toward acidic residues. The Zn(2+) site is built by Cys892, Cys894, Cys903, and His904. Residues 898-908 (KKYKQCHGRLE) show a composition bias toward basic residues.

Belongs to the SecA family. In terms of assembly, monomer and homodimer. Part of the essential Sec protein translocation apparatus which comprises SecA, SecYEG and auxiliary proteins SecDF-YajC and YidC. The cofactor is Zn(2+).

The protein localises to the cell inner membrane. The protein resides in the cytoplasm. The catalysed reaction is ATP + H2O + cellular proteinSide 1 = ADP + phosphate + cellular proteinSide 2.. In terms of biological role, part of the Sec protein translocase complex. Interacts with the SecYEG preprotein conducting channel. Has a central role in coupling the hydrolysis of ATP to the transfer of proteins into and across the cell membrane, serving both as a receptor for the preprotein-SecB complex and as an ATP-driven molecular motor driving the stepwise translocation of polypeptide chains across the membrane. The polypeptide is Protein translocase subunit SecA (Hahella chejuensis (strain KCTC 2396)).